A 189-amino-acid polypeptide reads, in one-letter code: Crossover junction endodeoxyribonuclease RuvC (189 aa).

Residues Asp12, Glu72, and Asp147 contribute to the active site. Mg(2+) contacts are provided by Asp12, Glu72, and Asp147.

This sequence belongs to the RuvC family. In terms of assembly, homodimer which binds Holliday junction (HJ) DNA. The HJ becomes 2-fold symmetrical on binding to RuvC with unstacked arms; it has a different conformation from HJ DNA in complex with RuvA. In the full resolvosome a probable DNA-RuvA(4)-RuvB(12)-RuvC(2) complex forms which resolves the HJ. Mg(2+) serves as cofactor.

Its subcellular location is the cytoplasm. It catalyses the reaction Endonucleolytic cleavage at a junction such as a reciprocal single-stranded crossover between two homologous DNA duplexes (Holliday junction).. In terms of biological role, the RuvA-RuvB-RuvC complex processes Holliday junction (HJ) DNA during genetic recombination and DNA repair. Endonuclease that resolves HJ intermediates. Cleaves cruciform DNA by making single-stranded nicks across the HJ at symmetrical positions within the homologous arms, yielding a 5'-phosphate and a 3'-hydroxyl group; requires a central core of homology in the junction. The consensus cleavage sequence is 5'-(A/T)TT(C/G)-3'. Cleavage occurs on the 3'-side of the TT dinucleotide at the point of strand exchange. HJ branch migration catalyzed by RuvA-RuvB allows RuvC to scan DNA until it finds its consensus sequence, where it cleaves and resolves the cruciform DNA. The protein is Crossover junction endodeoxyribonuclease RuvC of Porphyromonas gingivalis (strain ATCC BAA-308 / W83).